Consider the following 493-residue polypeptide: 3-octaprenyl-4-hydroxybenzoate carboxy-lyase (493 aa).

Asn-172 provides a ligand contact to Mn(2+). Residues 175-177 (IYR), 189-191 (RWL), and 194-195 (RG) each bind prenylated FMN. Residue Glu-238 coordinates Mn(2+). Residue Asp-287 is the Proton donor of the active site.

The protein belongs to the UbiD family. As to quaternary structure, homohexamer. Prenylated FMN serves as cofactor. The cofactor is Mn(2+).

It localises to the cell membrane. The enzyme catalyses a 4-hydroxy-3-(all-trans-polyprenyl)benzoate + H(+) = a 2-(all-trans-polyprenyl)phenol + CO2. It functions in the pathway cofactor biosynthesis; ubiquinone biosynthesis. Functionally, catalyzes the decarboxylation of 3-octaprenyl-4-hydroxy benzoate to 2-octaprenylphenol, an intermediate step in ubiquinone biosynthesis. This Shewanella baltica (strain OS195) protein is 3-octaprenyl-4-hydroxybenzoate carboxy-lyase.